The following is a 123-amino-acid chain: Neuropeptide-like peptides nlp-40 (123 aa).

The first 17 residues, 1 to 17 (MKLVILLSFVATVAVFA), serve as a signal peptide directing secretion. 3 consecutive propeptides follow at residues 30–31 (RA), 66–67 (KR), and 75–76 (KR).

As to expression, expressed in intestinal cells.

The protein resides in the secreted. It localises to the cytoplasmic vesicle. Neuropeptide ligand for the G-protein coupled receptor aex-2. Activates and regulates the rhythmic calcium influx in DVB GABergic neurons during the defecation motor program, which is a coordinated series of three muscle contractions that occurs every 45 seconds. This chain is Neuropeptide-like peptides nlp-40, found in Caenorhabditis elegans.